We begin with the raw amino-acid sequence, 190 residues long: Potassium-transporting ATPase KdpC subunit (190 aa).

Residues 10 to 30 (TFLFLLLITGGVYPLLTTALG) traverse the membrane as a helical segment.

It belongs to the KdpC family. In terms of assembly, the system is composed of three essential subunits: KdpA, KdpB and KdpC.

The protein resides in the cell inner membrane. Functionally, part of the high-affinity ATP-driven potassium transport (or Kdp) system, which catalyzes the hydrolysis of ATP coupled with the electrogenic transport of potassium into the cytoplasm. This subunit acts as a catalytic chaperone that increases the ATP-binding affinity of the ATP-hydrolyzing subunit KdpB by the formation of a transient KdpB/KdpC/ATP ternary complex. This is Potassium-transporting ATPase KdpC subunit from Shigella flexneri serotype 5b (strain 8401).